Reading from the N-terminus, the 278-residue chain is Sulfur carrier protein FdhD (278 aa).

Cys-124 acts as the Cysteine persulfide intermediate in catalysis.

This sequence belongs to the FdhD family.

It localises to the cytoplasm. Functionally, required for formate dehydrogenase (FDH) activity. Acts as a sulfur carrier protein that transfers sulfur from IscS to the molybdenum cofactor prior to its insertion into FDH. This chain is Sulfur carrier protein FdhD, found in Burkholderia cenocepacia (strain ATCC BAA-245 / DSM 16553 / LMG 16656 / NCTC 13227 / J2315 / CF5610) (Burkholderia cepacia (strain J2315)).